An 849-amino-acid chain; its full sequence is SMY2 homolog 2 (849 aa).

A GYF domain is found at 149–205 (ESQWKYIDSNGNIQGPFGTNNMSQWYQGGYFTPTLQICRLATSPEPFGVNDRFIRLG). Disordered regions lie at residues 305–505 (APLS…TTNL), 527–547 (DLKKENSSKKEKKPNRTQLDR), 593–612 (TKINSQSKINKANNGDIKPD), and 634–661 (NRASSLDDFISRTPSPSSSALNSSNTSN). Residues 308 to 318 (STTSSRSNKTT) show a composition bias toward low complexity. The span at 319 to 331 (SSHEEKVPSHEEA) shows a compositional bias: basic and acidic residues. A Phosphothreonine modification is found at T350. 3 stretches are compositionally biased toward basic and acidic residues: residues 361–375 (TKQEEESRGSEKEQN), 387–403 (VDRKDVISTADEPKSKD), and 425–443 (LLEEQQRQEEEKKRREEQR). Residues 410 to 484 (EEQKRFAKAE…EKQKELLNNI (75 aa)) are a coiled coil. Positions 444–455 (KLKKEKKLKQKQ) are enriched in basic residues. Residues 456–479 (KKEEEKLKKKKKEEGKLEKEKQKE) are compositionally biased toward basic and acidic residues. Positions 483–505 (NILTGDTETPSSENTATSITTNL) are enriched in polar residues. Over residues 594 to 605 (KINSQSKINKAN) the composition is skewed to polar residues. Low complexity predominate over residues 644–661 (SRTPSPSSSALNSSNTSN).

It belongs to the SMY2/mpd2 family. Interacts with ribosomes. Interacts with EAP1 and MSL5 (via the GYP domain).

The protein resides in the cytoplasm. In Saccharomyces cerevisiae (strain ATCC 204508 / S288c) (Baker's yeast), this protein is SMY2 homolog 2 (SYH1).